The following is a 387-amino-acid chain: Proline-rich protein 5 (387 aa).

Interaction with RICTOR stretches follow at residues 10–96 (MSSP…LTKG) and 189–219 (HESR…YGLY). Residues 13 to 34 (PSLSDLGKREPGAAGTDERGTQ) are disordered. Positions 18–33 (LGKREPGAAGTDERGT) are enriched in basic and acidic residues. S253 is modified (phosphoserine). The segment at 262-387 (NPVAEHEAEG…EAPGGRPSVV (126 aa)) is disordered. The span at 305-314 (SGTFRSSPTP) shows a compositional bias: polar residues. S373 is modified (phosphoserine).

Belongs to the PROTOR family. In terms of assembly, associated component of the mechanistic target of rapamycin complex 2 (mTORC2). Binds directly to MTOR and RICTOR within the TORC2 complex. In terms of tissue distribution, ubiquitously expressed. Expressed at high levels in kidney.

Its function is as follows. Associated subunit of mTORC2, which regulates cell growth and survival in response to hormonal signals. mTORC2 is activated by growth factors, but, in contrast to mTORC1, seems to be nutrient-insensitive. mTORC2 seems to function upstream of Rho GTPases to regulate the actin cytoskeleton, probably by activating one or more Rho-type guanine nucleotide exchange factors. PRR5 plays an important role in regulation of PDGFRB expression and in modulation of platelet-derived growth factor signaling. May act as a tumor suppressor in breast cancer. The chain is Proline-rich protein 5 from Mus musculus (Mouse).